The sequence spans 201 residues: Akirin-2 (201 aa).

2 positions are modified to phosphoserine: S18 and S21. The short motif at 23 to 28 (KRRRCA) is the Nuclear localization signal element. Position 55 is a phosphoserine (S55). The short motif at 198–201 (SYVS) is the SYVS motif element.

This sequence belongs to the akirin family. As to quaternary structure, homodimer. Interacts with IPO9; the interaction is direct. Associates with 20S and 26S proteasomes. Interacts with SMARCD1; promoting SWI/SNF complex recruitment. Interacts with NFKBIZ. Interacts with YWHAB. Post-translationally, polyubiquitinated. Polyubiquitination is dependent of UBR5 that extends pre-ubiquitinated AKIRIN2.

It localises to the nucleus. Its subcellular location is the cytoplasm. It is found in the membrane. Functionally, molecular adapter that acts as a bridge between a variety of multiprotein complexes, and which is involved in embryonic development, immunity, myogenesis and brain development. Plays a key role in nuclear protein degradation by promoting import of proteasomes into the nucleus: directly binds to fully assembled 20S proteasomes at one end and to nuclear import receptor IPO9 at the other end, bridging them together and mediating the import of pre-assembled proteasome complexes through the nuclear pore. Involved in innate immunity by regulating the production of interleukin-6 (IL6) downstream of Toll-like receptor (TLR): acts by bridging the NF-kappa-B inhibitor NFKBIZ and the SWI/SNF complex, leading to promote induction of IL6. Also involved in adaptive immunity by promoting B-cell activation. Involved in brain development: required for the survival and proliferation of cerebral cortical progenitor cells. Involved in myogenesis: required for skeletal muscle formation and skeletal development, possibly by regulating expression of muscle differentiation factors. Also plays a role in facilitating interdigital tissue regression during limb development. This Mus musculus (Mouse) protein is Akirin-2.